A 267-amino-acid chain; its full sequence is 3-methyl-2-oxobutanoate hydroxymethyltransferase (267 aa).

Mg(2+)-binding residues include D45 and D84. Residues D45 to S46, D84, and K113 each bind 3-methyl-2-oxobutanoate. E115 contributes to the Mg(2+) binding site. E182 functions as the Proton acceptor in the catalytic mechanism.

Belongs to the PanB family. Homodecamer; pentamer of dimers. The cofactor is Mg(2+).

The protein resides in the cytoplasm. It catalyses the reaction 3-methyl-2-oxobutanoate + (6R)-5,10-methylene-5,6,7,8-tetrahydrofolate + H2O = 2-dehydropantoate + (6S)-5,6,7,8-tetrahydrofolate. Its pathway is cofactor biosynthesis; coenzyme A biosynthesis. In terms of biological role, catalyzes the reversible reaction in which hydroxymethyl group from 5,10-methylenetetrahydrofolate is transferred onto alpha-ketoisovalerate to form ketopantoate. In Saccharolobus islandicus (strain Y.G.57.14 / Yellowstone #1) (Sulfolobus islandicus), this protein is 3-methyl-2-oxobutanoate hydroxymethyltransferase.